Consider the following 118-residue polypeptide: MPEEESIDIKFRLYDGSDIGPFRYSAASTVDFLKQRVVSDWPKGKTVVPKGINEVKLISSGKILENNKTVGQCKTPFGDIAGGVIVMHVVVQPSLAKSKTEKKVDKAPKAVICTCTIL.

The 67-residue stretch at 7-73 (IDIKFRLYDG…LENNKTVGQC (67 aa)) folds into the Ubiquitin-like domain. Cysteine 113 is lipidated: S-palmitoyl cysteine. Position 115 is a cysteine methyl ester (cysteine 115). The S-geranylgeranyl cysteine moiety is linked to residue cysteine 115. A propeptide spans 116–118 (TIL) (removed in mature form).

In terms of tissue distribution, ubiquitous, but three fold higher expression in senescing leaves.

It localises to the cell membrane. Functionally, may serve as docking site to facilitate the association of other proteins to the plasma membrane. This chain is Membrane-anchored ubiquitin-fold protein 3 (MUB3), found in Arabidopsis thaliana (Mouse-ear cress).